The following is a 251-amino-acid chain: Octanoyltransferase (251 aa).

The BPL/LPL catalytic domain occupies Asp-49–Leu-230. Residues Arg-87 to His-94, Ala-160 to Gly-162, and Gly-173 to Ala-175 contribute to the substrate site. The Acyl-thioester intermediate role is filled by Cys-191.

Belongs to the LipB family.

The protein resides in the cytoplasm. The catalysed reaction is octanoyl-[ACP] + L-lysyl-[protein] = N(6)-octanoyl-L-lysyl-[protein] + holo-[ACP] + H(+). The protein operates within protein modification; protein lipoylation via endogenous pathway; protein N(6)-(lipoyl)lysine from octanoyl-[acyl-carrier-protein]: step 1/2. Catalyzes the transfer of endogenously produced octanoic acid from octanoyl-acyl-carrier-protein onto the lipoyl domains of lipoate-dependent enzymes. Lipoyl-ACP can also act as a substrate although octanoyl-ACP is likely to be the physiological substrate. This is Octanoyltransferase from Corynebacterium efficiens (strain DSM 44549 / YS-314 / AJ 12310 / JCM 11189 / NBRC 100395).